Reading from the N-terminus, the 436-residue chain is Glutamyl-tRNA reductase (436 aa).

Residues 49–52 (TCNR), Ser-109, 114–116 (EGQ), and Gln-120 contribute to the substrate site. The Nucleophile role is filled by Cys-50. 198-203 (GAGRMS) provides a ligand contact to NADP(+).

It belongs to the glutamyl-tRNA reductase family. As to quaternary structure, homodimer.

It catalyses the reaction (S)-4-amino-5-oxopentanoate + tRNA(Glu) + NADP(+) = L-glutamyl-tRNA(Glu) + NADPH + H(+). Its pathway is porphyrin-containing compound metabolism; protoporphyrin-IX biosynthesis; 5-aminolevulinate from L-glutamyl-tRNA(Glu): step 1/2. It participates in porphyrin-containing compound metabolism; chlorophyll biosynthesis. In terms of biological role, catalyzes the NADPH-dependent reduction of glutamyl-tRNA(Glu) to glutamate 1-semialdehyde (GSA). The chain is Glutamyl-tRNA reductase from Prochlorococcus marinus (strain MIT 9312).